Reading from the N-terminus, the 199-residue chain is Recombination protein RecR (199 aa).

The segment at 57-72 adopts a C4-type zinc-finger fold; that stretch reads CEICGNMDTENICRIC. Residues 80 to 175 enclose the Toprim domain; it reads SVIAIVETVA…KISRLASGIP (96 aa).

This sequence belongs to the RecR family.

In terms of biological role, may play a role in DNA repair. It seems to be involved in an RecBC-independent recombinational process of DNA repair. It may act with RecF and RecO. The polypeptide is Recombination protein RecR (Rickettsia canadensis (strain McKiel)).